Here is a 147-residue protein sequence, read N- to C-terminus: Large ribosomal subunit protein uL16 (147 aa).

Belongs to the universal ribosomal protein uL16 family. Part of the 50S ribosomal subunit.

Binds 23S rRNA and is also seen to make contacts with the A and possibly P site tRNAs. The protein is Large ribosomal subunit protein uL16 of Clostridium novyi (strain NT).